The primary structure comprises 742 residues: mRNA export factor ICP27 homolog (742 aa).

Over residues 1–11 the composition is skewed to basic and acidic residues; the sequence is MELHSRGRHDA. The interval 1-202 is disordered; sequence MELHSRGRHD…NHHGSSAGPQ (202 aa). Positions 72–85 are enriched in basic residues; the sequence is SHHHRPCVPARRPR. Residues 153-171 are compositionally biased toward basic and acidic residues; that stretch reads KSYDNDDGEPHHHGGDSTH. The span at 179–202 shows a compositional bias: polar residues; the sequence is CPTTFGSSHPSSANNHHGSSAGPQ. Residues Cys387, His494, Cys496, and Cys501 each contribute to the Zn(2+) site. The segment at 387 to 501 adopts a CHC2-type zinc-finger fold; it reads CILDHQDGWG…QCHECQNEMC (115 aa). The interval 540–742 is disordered; that stretch reads ASNHATAGGQ…MLCYSDDMDD (203 aa). Residues 578–587 show a composition bias toward basic and acidic residues; sequence YDKKDREGSH. Over residues 614-626 the composition is skewed to acidic residues; sequence GELEEDEDSDDAS. Positions 692–703 are enriched in polar residues; that stretch reads QSANGNHSTTAT.

Belongs to the HHV-1 ICP27 protein family. In terms of assembly, self-associates and forms high-molecular-mass complexes. Interacts with host DDX39A and DDX39B; these interactions are required for UL69 function in mRNA export. Interacts with host SUPT6H, EIF4A1 and PABPC1. Phosphorylated by UL97 and host CDK1, CDK7 and CD9. Phosphorylation by CDKs impacts on UL69 nuclear localization and activity.

It localises to the virion tegument. The protein resides in the virion. It is found in the host nucleus. Its subcellular location is the host cytoplasm. Its function is as follows. Immediate early (EI) protein that plays many roles during productive infection including regulation of host cell cycle progression, regulation of viral gene expression or nuclear export of intronless viral RNAs. Acts as a transcriptional transactivator via interaction with the cellular transcription elongation factor SUPT6H and as a nuclear RNA export factor via interaction with UAP56, a component of the cellular mRNA export machinery. The polypeptide is mRNA export factor ICP27 homolog (Human cytomegalovirus (strain Merlin) (HHV-5)).